A 247-amino-acid polypeptide reads, in one-letter code: tRNA pseudouridine synthase A (247 aa).

Asp-52 serves as the catalytic Nucleophile. A substrate-binding site is contributed by Tyr-113.

The protein belongs to the tRNA pseudouridine synthase TruA family. Homodimer.

It carries out the reaction uridine(38/39/40) in tRNA = pseudouridine(38/39/40) in tRNA. Formation of pseudouridine at positions 38, 39 and 40 in the anticodon stem and loop of transfer RNAs. The chain is tRNA pseudouridine synthase A from Sinorhizobium fredii (strain NBRC 101917 / NGR234).